The following is a 146-amino-acid chain: Hemoglobin subunit beta-2 (146 aa).

The Globin domain maps to 2 to 146 (EWTDFERATI…VVSSLGRQYH (145 aa)). Residues His-63 and His-92 each contribute to the heme b site.

The protein belongs to the globin family. In terms of assembly, hb 2 is a heterotetramer of two alpha-2 and two beta-2 chains. As to expression, red blood cells.

Functionally, involved in oxygen transport from gills to the various peripheral tissues. The chain is Hemoglobin subunit beta-2 (hbb2) from Gobionotothen gibberifrons (Humped rockcod).